We begin with the raw amino-acid sequence, 337 residues long: Inner membrane protein YhjD (337 aa).

A compositionally biased stretch (basic and acidic residues) spans Met1 to Ser29. Residues Met1–Val31 are disordered. Residues Met1–Thr74 are Cytoplasmic-facing. Residues Tyr75 to Ala97 traverse the membrane as a helical segment. Over Ser98–Gln133 the chain is Periplasmic. A helical transmembrane segment spans residues Arg134–Leu156. Over Arg157–Asp185 the chain is Cytoplasmic. Residues Phe186–Ser208 form a helical membrane-spanning segment. Over Ala209–Pro227 the chain is Periplasmic. A helical membrane pass occupies residues Thr228–Trp250. Topologically, residues Arg251–Ala261 are cytoplasmic. Residues Leu262–Leu284 traverse the membrane as a helical segment. The Periplasmic portion of the chain corresponds to Pro285 to Ser298. Residues Val299–Ala321 traverse the membrane as a helical segment. Residues Thr322–Pro337 lie on the Cytoplasmic side of the membrane.

The protein localises to the cell inner membrane. The chain is Inner membrane protein YhjD (yhjD) from Escherichia coli (strain K12).